Reading from the N-terminus, the 768-residue chain is 5-methyltetrahydropteroyltriglutamate--homocysteine methyltransferase (768 aa).

5-methyltetrahydropteroyltri-L-glutamate is bound by residues 17–20 and lysine 113; that span reads REWK. L-homocysteine contacts are provided by residues 440–442 and glutamate 493; that span reads IGS. L-methionine-binding positions include 440–442 and glutamate 493; that span reads IGS. Residue tryptophan 570 coordinates 5-methyltetrahydropteroyltri-L-glutamate. Residue aspartate 608 coordinates L-homocysteine. L-methionine is bound at residue aspartate 608. Glutamate 614 contacts 5-methyltetrahydropteroyltri-L-glutamate. 3 residues coordinate Zn(2+): histidine 650, cysteine 652, and glutamate 674. Catalysis depends on histidine 703, which acts as the Proton donor. Residue cysteine 735 coordinates Zn(2+).

This sequence belongs to the vitamin-B12 independent methionine synthase family. Zn(2+) is required as a cofactor.

The catalysed reaction is 5-methyltetrahydropteroyltri-L-glutamate + L-homocysteine = tetrahydropteroyltri-L-glutamate + L-methionine. The protein operates within amino-acid biosynthesis; L-methionine biosynthesis via de novo pathway; L-methionine from L-homocysteine (MetE route): step 1/1. In terms of biological role, catalyzes the transfer of a methyl group from 5-methyltetrahydrofolate to homocysteine resulting in methionine formation. This chain is 5-methyltetrahydropteroyltriglutamate--homocysteine methyltransferase, found in Lactiplantibacillus plantarum (strain ATCC BAA-793 / NCIMB 8826 / WCFS1) (Lactobacillus plantarum).